A 366-amino-acid chain; its full sequence is tRNA/tmRNA (uracil-C(5))-methyltransferase (366 aa).

Gln190, Tyr218, Asn223, Glu239, and Asp299 together coordinate S-adenosyl-L-methionine. Cys324 functions as the Nucleophile in the catalytic mechanism. The active-site Proton acceptor is Glu358.

It belongs to the class I-like SAM-binding methyltransferase superfamily. RNA M5U methyltransferase family. TrmA subfamily.

The enzyme catalyses uridine(54) in tRNA + S-adenosyl-L-methionine = 5-methyluridine(54) in tRNA + S-adenosyl-L-homocysteine + H(+). The catalysed reaction is uridine(341) in tmRNA + S-adenosyl-L-methionine = 5-methyluridine(341) in tmRNA + S-adenosyl-L-homocysteine + H(+). In terms of biological role, dual-specificity methyltransferase that catalyzes the formation of 5-methyluridine at position 54 (m5U54) in all tRNAs, and that of position 341 (m5U341) in tmRNA (transfer-mRNA). This chain is tRNA/tmRNA (uracil-C(5))-methyltransferase, found in Shigella boydii serotype 18 (strain CDC 3083-94 / BS512).